Here is a 250-residue protein sequence, read N- to C-terminus: 2,3-bisphosphoglycerate-dependent phosphoglycerate mutase (250 aa).

Residues 8–15 (RHGESQWN), 21–22 (TG), arginine 60, 87–90 (ERHY), lysine 98, 114–115 (RR), and 183–184 (GN) contribute to the substrate site. The active-site Tele-phosphohistidine intermediate is the histidine 9. The active-site Proton donor/acceptor is the glutamate 87.

The protein belongs to the phosphoglycerate mutase family. BPG-dependent PGAM subfamily. Homodimer.

The enzyme catalyses (2R)-2-phosphoglycerate = (2R)-3-phosphoglycerate. It functions in the pathway carbohydrate degradation; glycolysis; pyruvate from D-glyceraldehyde 3-phosphate: step 3/5. In terms of biological role, catalyzes the interconversion of 2-phosphoglycerate and 3-phosphoglycerate. This Bordetella petrii (strain ATCC BAA-461 / DSM 12804 / CCUG 43448) protein is 2,3-bisphosphoglycerate-dependent phosphoglycerate mutase.